The chain runs to 199 residues: Nucleoside triphosphate pyrophosphatase (199 aa).

Aspartate 76 serves as the catalytic Proton acceptor.

It belongs to the Maf family. The cofactor is a divalent metal cation.

The protein localises to the cytoplasm. It catalyses the reaction a ribonucleoside 5'-triphosphate + H2O = a ribonucleoside 5'-phosphate + diphosphate + H(+). The catalysed reaction is a 2'-deoxyribonucleoside 5'-triphosphate + H2O = a 2'-deoxyribonucleoside 5'-phosphate + diphosphate + H(+). Functionally, nucleoside triphosphate pyrophosphatase. May have a dual role in cell division arrest and in preventing the incorporation of modified nucleotides into cellular nucleic acids. This is Nucleoside triphosphate pyrophosphatase from Ruegeria sp. (strain TM1040) (Silicibacter sp.).